We begin with the raw amino-acid sequence, 137 residues long: Putative nickel-responsive regulator (137 aa).

The Ni(2+) site is built by H79, H90, H92, and C98.

This sequence belongs to the transcriptional regulatory CopG/NikR family. Requires Ni(2+) as cofactor.

Transcriptional regulator. In Campylobacter concisus (strain 13826), this protein is Putative nickel-responsive regulator.